Consider the following 1328-residue polypeptide: Myb-binding protein 1A (1328 aa).

The interval 1 to 22 (MESRDPAQPMSPGEATQSGARP) is disordered. Residues 1–582 (MESRDPAQPM…WDRMLQTLKE (582 aa)) form an interaction with MYB region. The residue at position 11 (Ser-11) is a Phosphoserine. Lys-71 and Lys-158 each carry N6-acetyllysine. 2 consecutive short sequence motifs (nuclear export signal) follow at residues 240–258 (SDEN…ASSV) and 263–281 (KLPA…EDKF). A disordered region spans residues 698-753 (SEDENDRVVVTDDSDERRLKGAEDKSEEGEDNRSSESEEESEGEESEEEERDGDVD). The segment covering 703–721 (DRVVVTDDSDERRLKGAED) has biased composition (basic and acidic residues). The span at 734–752 (SEEESEGEESEEEERDGDV) shows a compositional bias: acidic residues. The residue at position 775 (Ser-775) is a Phosphoserine. Positions 1146–1292 (RPKLEKKDAK…KKGVLGKSPL (147 aa)) are disordered. A compositionally biased stretch (basic and acidic residues) spans 1147-1156 (PKLEKKDAKE). Lys-1148 participates in a covalent cross-link: Glycyl lysine isopeptide (Lys-Gly) (interchain with G-Cter in SUMO2). The interval 1151–1328 (KKDAKEIPSA…KAQVRKAGKP (178 aa)) is required for nuclear and nucleolar localization. 2 positions are modified to phosphoserine: Ser-1159 and Ser-1163. Over residues 1166 to 1184 (SKKRKKKGFLPETKKRKKR) the composition is skewed to basic residues. Ser-1186 is modified (phosphoserine). 2 positions are modified to phosphothreonine: Thr-1190 and Thr-1196. Ser-1207 is modified (phosphoserine). Residues 1209 to 1218 (GRKKRNRTKA) show a composition bias toward basic residues. The residue at position 1232 (Ser-1232) is a Phosphoserine. Phosphothreonine is present on Thr-1239. Residue Ser-1241 is modified to Phosphoserine. Thr-1244 is subject to Phosphothreonine. Phosphoserine is present on residues Ser-1248 and Ser-1267. Thr-1269 bears the Phosphothreonine mark. Phosphoserine is present on residues Ser-1290 and Ser-1303. The tract at residues 1306–1328 (IRSPSLLQSGAKKKAQVRKAGKP) is disordered. The residue at position 1307 (Arg-1307) is a Citrulline. Phosphoserine occurs at positions 1308, 1310, and 1314. A compositionally biased stretch (basic residues) spans 1316-1328 (AKKKAQVRKAGKP).

This sequence belongs to the MYBBP1A family. Binds to and represses JUN and MYB via the leucine zipper regions present in these proteins. Also binds to and represses PPARGC1A: this interaction is abrogated when PPARGC1A is phosphorylated by MAPK1/ERK. Binds to and stimulates transcription by AHR. Binds to KPNA2. Interacts with CLOCK and CRY1. Component of the B-WICH complex, at least composed of SMARCA5/SNF2H, BAZ1B/WSTF, SF3B1, DEK, MYO1C, ERCC6, MYBBP1A and DDX21. In terms of processing, citrullinated by PADI4.

The protein resides in the cytoplasm. It localises to the nucleus. The protein localises to the nucleolus. In terms of biological role, may activate or repress transcription via interactions with sequence specific DNA-binding proteins. Repression may be mediated at least in part by histone deacetylase activity (HDAC activity). Acts as a corepressor and in concert with CRY1, represses the transcription of the core circadian clock component PER2. Preferentially binds to dimethylated histone H3 'Lys-9' (H3K9me2) on the PER2 promoter. Has a role in rRNA biogenesis together with PWP1. The sequence is that of Myb-binding protein 1A (MYBBP1A) from Homo sapiens (Human).